Consider the following 380-residue polypeptide: 4-hydroxy-tetrahydrodipicolinate synthase, chloroplastic (380 aa).

A disordered region spans residues 1–44 (MISPTNLLPARKITPVSNGGAATASPSSPSVAARPRRLPSGLQS). The N-terminal 54 residues, 1–54 (MISPTNLLPARKITPVSNGGAATASPSSPSVAARPRRLPSGLQSVTGRGKVSLA), are a transit peptide targeting the chloroplast. The span at 21–33 (AATASPSSPSVAA) shows a compositional bias: low complexity. Position 123 (threonine 123) interacts with pyruvate. Tyrosine 209 (proton donor/acceptor) is an active-site residue. Lysine 237 acts as the Schiff-base intermediate with substrate in catalysis. Residue isoleucine 276 coordinates pyruvate.

It belongs to the DapA family. In terms of assembly, tetramer of modified subunits derived from two genes in different combinations.

Its subcellular location is the plastid. It localises to the chloroplast. It catalyses the reaction L-aspartate 4-semialdehyde + pyruvate = (2S,4S)-4-hydroxy-2,3,4,5-tetrahydrodipicolinate + H2O + H(+). It participates in amino-acid biosynthesis; L-lysine biosynthesis via DAP pathway; (S)-tetrahydrodipicolinate from L-aspartate: step 3/4. Its activity is regulated as follows. Sensitive to lysine inhibition. This inhibition increase in an allosteric manner with increasing concentration of the inhibitor. Its function is as follows. Catalyzes the condensation of (S)-aspartate-beta-semialdehyde [(S)-ASA] and pyruvate to 4-hydroxy-tetrahydrodipicolinate (HTPA). The chain is 4-hydroxy-tetrahydrodipicolinate synthase, chloroplastic from Zea mays (Maize).